The sequence spans 253 residues: Ribonuclease HII (253 aa).

Positions 30–221 (GPVAGVDEVG…VRRLVVDGEP (192 aa)) constitute an RNase H type-2 domain. Asp36, Glu37, and Asp130 together coordinate a divalent metal cation.

Belongs to the RNase HII family. The cofactor is Mn(2+). Mg(2+) is required as a cofactor.

It is found in the cytoplasm. The enzyme catalyses Endonucleolytic cleavage to 5'-phosphomonoester.. Endonuclease that specifically degrades the RNA of RNA-DNA hybrids. The sequence is that of Ribonuclease HII from Mycolicibacterium gilvum (strain PYR-GCK) (Mycobacterium gilvum (strain PYR-GCK)).